The sequence spans 120 residues: UPF0344 protein lmo2265 (120 aa).

4 consecutive transmembrane segments (helical) span residues 3–23 (GYIH…ALLI), 33–53 (MLQM…IMMV), 62–82 (ILAI…EMLL), and 92–112 (GMFL…GFYL).

It belongs to the UPF0344 family.

It localises to the cell membrane. The polypeptide is UPF0344 protein lmo2265 (Listeria monocytogenes serovar 1/2a (strain ATCC BAA-679 / EGD-e)).